The primary structure comprises 587 residues: Proteasome-associated ATPase (587 aa).

The stretch at 9–94 forms a coiled coil; sequence ARKAQHDAEI…KEEVDRLAQP (86 aa). ATP is bound at residue 276-281; it reads GCGKTL. Residues 586–587 form a docks into pockets in the proteasome alpha-ring region; it reads YL.

It belongs to the AAA ATPase family. In terms of assembly, homohexamer. Assembles into a hexameric ring structure that caps the 20S proteasome core. Strongly interacts with the prokaryotic ubiquitin-like protein Pup through a hydrophobic interface; the interacting region of ARC lies in its N-terminal coiled-coil domain. There is one Pup binding site per ARC hexamer ring. Upon ATP-binding, the C-terminus of ARC interacts with the alpha-rings of the proteasome core, possibly by binding to the intersubunit pockets.

The protein operates within protein degradation; proteasomal Pup-dependent pathway. Functionally, ATPase which is responsible for recognizing, binding, unfolding and translocation of pupylated proteins into the bacterial 20S proteasome core particle. May be essential for opening the gate of the 20S proteasome via an interaction with its C-terminus, thereby allowing substrate entry and access to the site of proteolysis. Thus, the C-termini of the proteasomal ATPase may function like a 'key in a lock' to induce gate opening and therefore regulate proteolysis. The protein is Proteasome-associated ATPase of Thermomonospora curvata (strain ATCC 19995 / DSM 43183 / JCM 3096 / KCTC 9072 / NBRC 15933 / NCIMB 10081 / Henssen B9).